A 1026-amino-acid polypeptide reads, in one-letter code: Multidrug resistance protein MdtC (1026 aa).

The next 11 membrane-spanning stretches (helical) occupy residues 15 to 35 (ILIA…LPVA), 333 to 353 (EVEE…FLFL), 360 to 380 (LIPA…MYLC), 387 to 407 (LSLM…IVVL), 431 to 451 (VGFT…PLLL), 463 to 483 (FAVT…TLTP), 528 to 548 (LVGV…IAIP), 853 to 873 (LILI…LYES), 897 to 917 (LFNA…IGIV), 953 to 973 (PIMM…LSGG), and 984 to 1004 (ITIV…TPVV).

The protein belongs to the resistance-nodulation-cell division (RND) (TC 2.A.6) family. MdtC subfamily. In terms of assembly, part of a tripartite efflux system composed of MdtA, MdtB and MdtC. MdtC forms a heteromultimer with MdtB.

The protein resides in the cell inner membrane. This chain is Multidrug resistance protein MdtC, found in Salmonella enteritidis PT4 (strain P125109).